The following is a 549-amino-acid chain: Plant intracellular Ras-group-related LRR protein 4 (549 aa).

Over residues 119 to 140 the composition is skewed to low complexity; the sequence is SPSSNGSVSSRPPLPPATTTAA. Positions 119 to 167 are disordered; sequence SPSSNGSVSSRPPLPPATTTAARSDSQSSLNFSERAPVRPKDMVSRDDS. Residues 141-150 show a composition bias toward polar residues; that stretch reads RSDSQSSLNF. A compositionally biased stretch (basic and acidic residues) spans 154–167; it reads APVRPKDMVSRDDS. The residue at position 167 (S167) is a Phosphoserine. LRR repeat units follow at residues 245-268, 269-291, 293-313, 314-337, 339-360, 362-383, 384-406, 407-430, 432-454, 455-476, and 478-500; these read LSSL…IGGL, SSLT…IGEL, NLVY…AFSR, LVRL…IGSL, SLKK…IGGC, SLIE…IGKI, TTLE…MSSL, ASLK…CFAT, LVKL…IGNL, EMLE…SFKM, and TKLR…IAEK. Positions 501–508 match the GVYW; degenerate motif; that stretch reads GPQAVVQY.

This sequence belongs to the SHOC2 family. Widely expressed.

Its function is as follows. Leucine-rich repeat protein that likely mediates protein interactions, possibly in the context of signal transduction. The polypeptide is Plant intracellular Ras-group-related LRR protein 4 (PIRL4) (Arabidopsis thaliana (Mouse-ear cress)).